A 168-amino-acid polypeptide reads, in one-letter code: Alkyl hydroperoxide reductase C (168 aa).

The 138-residue stretch at 1–138 folds into the Thioredoxin domain; sequence EFIEVSEESF…LVNKIKAAQY (138 aa). The Cysteine sulfenic acid (-SOH) intermediate role is filled by cysteine 28.

It belongs to the peroxiredoxin family. AhpC/Prx1 subfamily. Homodimer; disulfide-linked, upon oxidation. 5 homodimers assemble to form a ring-like decamer.

Its subcellular location is the cytoplasm. The enzyme catalyses a hydroperoxide + NADH + H(+) = an alcohol + NAD(+) + H2O. Functionally, thiol-specific peroxidase that catalyzes the reduction of hydrogen peroxide and organic hydroperoxides to water and alcohols, respectively. Plays a role in cell protection against oxidative stress by detoxifying peroxides. This is Alkyl hydroperoxide reductase C from Ferdinandcohnia aciditolerans (strain JCM 32973 / CCTCC AB 2017280 / YN-1) (Bacillus aciditolerans).